Reading from the N-terminus, the 291-residue chain is Maintenance of mitochondrial morphology protein 1 (291 aa).

Topologically, residues 1–16 (MPNNYVFSLQPTFTQG) are lumenal. The helical transmembrane segment at 17-37 (LILGQLSILVLLGMILKFLFL) threads the bilayer. At 38 to 291 (DSTQHPFESS…KKEMSDADLS (254 aa)) the chain is on the cytoplasmic side. The 205-residue stretch at 73–277 (NAESAEWFNV…LPGLASVVDV (205 aa)) folds into the SMP-LTD domain.

It belongs to the MMM1 family. As to quaternary structure, homodimer. Component of the ER-mitochondria encounter structure (ERMES) or MDM complex, composed of MMM1, MDM10, MDM12 and MDM34. An MMM1 homodimer associates with one molecule of MDM12 on each side in a pairwise head-to-tail manner, and the SMP-LTD domains of MMM1 and MDM12 generate a continuous hydrophobic tunnel for phospholipid trafficking.

The protein localises to the endoplasmic reticulum membrane. Functionally, component of the ERMES/MDM complex, which serves as a molecular tether to connect the endoplasmic reticulum (ER) and mitochondria. Components of this complex are involved in the control of mitochondrial shape and protein biogenesis, and function in nonvesicular lipid trafficking between the ER and mitochondria. The MDM12-MMM1 subcomplex functions in the major beta-barrel assembly pathway that is responsible for biogenesis of all outer membrane beta-barrel proteins, and acts in a late step after the SAM complex. The MDM10-MDM12-MMM1 subcomplex further acts in the TOM40-specific pathway after the action of the MDM12-MMM1 complex. Essential for establishing and maintaining the structure of mitochondria and maintenance of mtDNA nucleoids. The chain is Maintenance of mitochondrial morphology protein 1 from Laccaria bicolor (strain S238N-H82 / ATCC MYA-4686) (Bicoloured deceiver).